A 206-amino-acid chain; its full sequence is Large ribosomal subunit protein uL4 (206 aa).

Residues 63-93 (MYKQKGTGRARHHSARAPQFRGGGKAHGPVV) are disordered. Positions 64–77 (YKQKGTGRARHHSA) are enriched in basic residues.

This sequence belongs to the universal ribosomal protein uL4 family. As to quaternary structure, part of the 50S ribosomal subunit.

Its function is as follows. One of the primary rRNA binding proteins, this protein initially binds near the 5'-end of the 23S rRNA. It is important during the early stages of 50S assembly. It makes multiple contacts with different domains of the 23S rRNA in the assembled 50S subunit and ribosome. In terms of biological role, forms part of the polypeptide exit tunnel. The chain is Large ribosomal subunit protein uL4 from Rhizobium meliloti (strain 1021) (Ensifer meliloti).